The primary structure comprises 91 residues: DNA-directed RNA polymerase subunit Rpo5 (91 aa).

This sequence belongs to the archaeal Rpo5/eukaryotic RPB5 RNA polymerase subunit family. Part of the RNA polymerase complex.

It is found in the cytoplasm. It catalyses the reaction RNA(n) + a ribonucleoside 5'-triphosphate = RNA(n+1) + diphosphate. DNA-dependent RNA polymerase (RNAP) catalyzes the transcription of DNA into RNA using the four ribonucleoside triphosphates as substrates. The sequence is that of DNA-directed RNA polymerase subunit Rpo5 from Staphylothermus marinus (strain ATCC 43588 / DSM 3639 / JCM 9404 / F1).